Consider the following 339-residue polypeptide: Ketol-acid reductoisomerase (NADP(+)) (339 aa).

Residues 1–182 (MRVYYDRDAD…GGGRSGIIET (182 aa)) enclose the KARI N-terminal Rossmann domain. NADP(+) is bound by residues 24 to 27 (YGSQ), Lys48, Ser51, Thr53, and 83 to 86 (DELQ). His108 is an active-site residue. Gly134 is a binding site for NADP(+). Positions 183–328 (NFREECETDL…AKLRGMMPWI (146 aa)) constitute a KARI C-terminal knotted domain. The Mg(2+) site is built by Asp191, Glu195, Glu227, and Glu231. Position 252 (Ser252) interacts with substrate.

The protein belongs to the ketol-acid reductoisomerase family. Mg(2+) is required as a cofactor.

It carries out the reaction (2R)-2,3-dihydroxy-3-methylbutanoate + NADP(+) = (2S)-2-acetolactate + NADPH + H(+). The enzyme catalyses (2R,3R)-2,3-dihydroxy-3-methylpentanoate + NADP(+) = (S)-2-ethyl-2-hydroxy-3-oxobutanoate + NADPH + H(+). It functions in the pathway amino-acid biosynthesis; L-isoleucine biosynthesis; L-isoleucine from 2-oxobutanoate: step 2/4. Its pathway is amino-acid biosynthesis; L-valine biosynthesis; L-valine from pyruvate: step 2/4. Functionally, involved in the biosynthesis of branched-chain amino acids (BCAA). Catalyzes an alkyl-migration followed by a ketol-acid reduction of (S)-2-acetolactate (S2AL) to yield (R)-2,3-dihydroxy-isovalerate. In the isomerase reaction, S2AL is rearranged via a Mg-dependent methyl migration to produce 3-hydroxy-3-methyl-2-ketobutyrate (HMKB). In the reductase reaction, this 2-ketoacid undergoes a metal-dependent reduction by NADPH to yield (R)-2,3-dihydroxy-isovalerate. The sequence is that of Ketol-acid reductoisomerase (NADP(+)) from Rhizobium johnstonii (strain DSM 114642 / LMG 32736 / 3841) (Rhizobium leguminosarum bv. viciae).